A 304-amino-acid chain; its full sequence is Acetylxylan esterase A (304 aa).

Residues 1-19 (MVKLQYLLSILLYAYSCTA) form the signal peptide. Serine 147 serves as the catalytic Charge relay system. Residue asparagine 189 is glycosylated (N-linked (GlcNAc...) asparagine).

It belongs to the carbohydrate esterase 1 (CE1) family. AxeA subfamily. Monomer.

It is found in the secreted. It carries out the reaction Deacetylation of xylans and xylo-oligosaccharides.. Its pathway is glycan degradation; xylan degradation. Its function is as follows. Acetylxylan esterase involved in the hydrolysis of xylan, a major structural heterogeneous polysaccharide found in plant biomass representing the second most abundant polysaccharide in the biosphere, after cellulose. Degrades acetylated xylans by cleaving acetyl side groups from the hetero-xylan backbone. This chain is Acetylxylan esterase A (axeA), found in Emericella nidulans (strain FGSC A4 / ATCC 38163 / CBS 112.46 / NRRL 194 / M139) (Aspergillus nidulans).